The chain runs to 427 residues: 3-phosphoshikimate 1-carboxyvinyltransferase (427 aa).

Residues lysine 22, serine 23, and arginine 27 each coordinate 3-phosphoshikimate. Lysine 22 is a phosphoenolpyruvate binding site. Residues glycine 96 and arginine 124 each contribute to the phosphoenolpyruvate site. Positions 170, 171, 172, 198, 314, 337, and 341 each coordinate 3-phosphoshikimate. Glutamine 172 lines the phosphoenolpyruvate pocket. Aspartate 314 acts as the Proton acceptor in catalysis. The phosphoenolpyruvate site is built by arginine 345, arginine 387, and lysine 412.

It belongs to the EPSP synthase family. Monomer.

Its subcellular location is the cytoplasm. The enzyme catalyses 3-phosphoshikimate + phosphoenolpyruvate = 5-O-(1-carboxyvinyl)-3-phosphoshikimate + phosphate. Its pathway is metabolic intermediate biosynthesis; chorismate biosynthesis; chorismate from D-erythrose 4-phosphate and phosphoenolpyruvate: step 6/7. Its function is as follows. Catalyzes the transfer of the enolpyruvyl moiety of phosphoenolpyruvate (PEP) to the 5-hydroxyl of shikimate-3-phosphate (S3P) to produce enolpyruvyl shikimate-3-phosphate and inorganic phosphate. This Tolumonas auensis (strain DSM 9187 / NBRC 110442 / TA 4) protein is 3-phosphoshikimate 1-carboxyvinyltransferase.